Here is a 282-residue protein sequence, read N- to C-terminus: Bifunctional protein FolD (282 aa).

NADP(+) is bound by residues 165-167, Ser190, and Thr231; that span reads GRS.

It belongs to the tetrahydrofolate dehydrogenase/cyclohydrolase family. As to quaternary structure, homodimer.

The catalysed reaction is (6R)-5,10-methylene-5,6,7,8-tetrahydrofolate + NADP(+) = (6R)-5,10-methenyltetrahydrofolate + NADPH. The enzyme catalyses (6R)-5,10-methenyltetrahydrofolate + H2O = (6R)-10-formyltetrahydrofolate + H(+). Its pathway is one-carbon metabolism; tetrahydrofolate interconversion. Functionally, catalyzes the oxidation of 5,10-methylenetetrahydrofolate to 5,10-methenyltetrahydrofolate and then the hydrolysis of 5,10-methenyltetrahydrofolate to 10-formyltetrahydrofolate. In Clostridium botulinum (strain Eklund 17B / Type B), this protein is Bifunctional protein FolD.